Here is an 85-residue protein sequence, read N- to C-terminus: Large ribosomal subunit protein bL27 (85 aa).

The disordered stretch occupies residues 1–21 (MAHKKGVGSTRNGRDSDGQRL).

It belongs to the bacterial ribosomal protein bL27 family.

The sequence is that of Large ribosomal subunit protein bL27 from Geotalea uraniireducens (strain Rf4) (Geobacter uraniireducens).